Reading from the N-terminus, the 536-residue chain is Chaperonin GroEL (536 aa).

ATP is bound by residues 29 to 32 (TLGP), 86 to 90 (DGTTT), Gly-413, 476 to 478 (DAA), and Asp-492.

The protein belongs to the chaperonin (HSP60) family. Forms a cylinder of 14 subunits composed of two heptameric rings stacked back-to-back. Interacts with the co-chaperonin GroES.

The protein resides in the cytoplasm. The catalysed reaction is ATP + H2O + a folded polypeptide = ADP + phosphate + an unfolded polypeptide.. In terms of biological role, together with its co-chaperonin GroES, plays an essential role in assisting protein folding. The GroEL-GroES system forms a nano-cage that allows encapsulation of the non-native substrate proteins and provides a physical environment optimized to promote and accelerate protein folding. The sequence is that of Chaperonin GroEL from Methanococcus vannielii (strain ATCC 35089 / DSM 1224 / JCM 13029 / OCM 148 / SB).